A 162-amino-acid chain; its full sequence is Auracyanin-A (162 aa).

Residues 1–22 (MKITLRMMVLAVLTAMAMVLAA) form the signal peptide. Cys23 carries the N-palmitoyl cysteine lipid modification. Cys23 is lipidated: S-diacylglycerol cysteine. The 121-residue stretch at 42 to 162 (VTIEIGSKGE…PLMQGKLVVN (121 aa)) folds into the Plastocyanin-like domain. The Cu cation site is built by His81, Cys146, His151, and Met155.

In terms of assembly, monomer. It depends on Cu cation as a cofactor.

The protein localises to the cell membrane. Its function is as follows. Probably a soluble electron acceptor for the integral membrane protein electron transfer alternative complex III (ACIII). This chain is Auracyanin-A, found in Chloroflexus aurantiacus (strain ATCC 29366 / DSM 635 / J-10-fl).